We begin with the raw amino-acid sequence, 231 residues long: WAP four-disulfide core domain protein 3 (231 aa).

A signal peptide spans 1–24 (MMLSCLFLLKALLALGSLESWITA). WAP domains follow at residues 26–68 (EHAK…CRDI), 69–114 (PKGR…VVPI), 119–162 (LAEF…LGDI), and 163–207 (EGGR…VPPV). Disulfide bonds link cysteine 33/cysteine 57, cysteine 40/cysteine 61, cysteine 44/cysteine 56, cysteine 50/cysteine 65, cysteine 76/cysteine 102, cysteine 85/cysteine 106, cysteine 89/cysteine 101, cysteine 95/cysteine 110, cysteine 126/cysteine 150, cysteine 133/cysteine 154, cysteine 137/cysteine 149, cysteine 143/cysteine 158, cysteine 170/cysteine 195, cysteine 178/cysteine 199, cysteine 182/cysteine 194, and cysteine 188/cysteine 203. Residue asparagine 107 is glycosylated (N-linked (GlcNAc...) asparagine). N-linked (GlcNAc...) asparagine glycosylation is present at asparagine 217.

Ubiquitously expressed.

The protein localises to the secreted. The polypeptide is WAP four-disulfide core domain protein 3 (WFDC3) (Homo sapiens (Human)).